Reading from the N-terminus, the 197-residue chain is LexA repressor (197 aa).

Residues 28-47 constitute a DNA-binding region (H-T-H motif); the sequence is VREIARRFRITPRGALLHLI. Catalysis depends on for autocatalytic cleavage activity residues S119 and K156.

This sequence belongs to the peptidase S24 family. In terms of assembly, homodimer.

The enzyme catalyses Hydrolysis of Ala-|-Gly bond in repressor LexA.. Functionally, represses a number of genes involved in the response to DNA damage (SOS response), including recA and lexA. In the presence of single-stranded DNA, RecA interacts with LexA causing an autocatalytic cleavage which disrupts the DNA-binding part of LexA, leading to derepression of the SOS regulon and eventually DNA repair. In Thermotoga sp. (strain RQ2), this protein is LexA repressor.